An 811-amino-acid chain; its full sequence is Potassium transporter 7 (811 aa).

Topologically, residues Met-1–Ser-52 are cytoplasmic. Residues Leu-53–Val-73 form a helical membrane-spanning segment. Over Tyr-74 to Gly-93 the chain is Extracellular. The helical transmembrane segment at Leu-94–Val-114 threads the bilayer. At Leu-115–Leu-181 the chain is on the cytoplasmic side. A helical transmembrane segment spans residues Leu-182–Ile-202. Over Ser-203–Gly-217 the chain is Extracellular. The helical transmembrane segment at Gly-218 to Leu-238 threads the bilayer. At Gln-239–Arg-245 the chain is on the cytoplasmic side. The helical transmembrane segment at Val-246–Leu-266 threads the bilayer. Topologically, residues Tyr-267–Gly-296 are extracellular. A helical transmembrane segment spans residues Trp-297 to Leu-317. Residues Gly-318 to Arg-326 lie on the Cytoplasmic side of the membrane. A helical membrane pass occupies residues Leu-327–Phe-347. Topologically, residues Leu-348–Ser-366 are extracellular. N-linked (GlcNAc...) asparagine glycosylation is present at Asn-351. Residues Leu-367–Ile-387 traverse the membrane as a helical segment. The Cytoplasmic portion of the chain corresponds to Ser-388–Gln-418. A helical transmembrane segment spans residues Ile-419–Phe-439. The Extracellular portion of the chain corresponds to Arg-440 to Gly-450. Residues Leu-451 to Val-471 form a helical membrane-spanning segment. The Cytoplasmic portion of the chain corresponds to Trp-472–Asn-475. The chain crosses the membrane as a helical span at residues Ile-476 to Ala-496. Residues Ala-497–Gln-503 lie on the Extracellular side of the membrane. A helical transmembrane segment spans residues Gly-504–Tyr-524. Residues Gly-525–Val-811 lie on the Cytoplasmic side of the membrane. A disordered region spans residues Thr-680–Ser-702.

Belongs to the HAK/KUP transporter (TC 2.A.72.3) family. In terms of tissue distribution, expressed in roots and shoots.

The protein localises to the membrane. Functionally, high-affinity potassium transporter. The protein is Potassium transporter 7 (HAK7) of Oryza sativa subsp. japonica (Rice).